A 169-amino-acid polypeptide reads, in one-letter code: Lipoprotein signal peptidase (169 aa).

Helical transmembrane passes span 4-24, 29-49, 70-90, and 101-121; these read PICSTGLRWLWLAVVVVILDI, WVMAHFALYESVPLIPFFNLT, WFFAGIAIGISVVLMVMMYRS, and YALIIGGALGNLYDRLVHGAV. Residues Asp123 and Asp141 contribute to the active site. Residues 137-157 traverse the membrane as a helical segment; that stretch reads FNLADVAICIGAALVIFEGFL.

It belongs to the peptidase A8 family.

The protein resides in the cell inner membrane. It carries out the reaction Release of signal peptides from bacterial membrane prolipoproteins. Hydrolyzes -Xaa-Yaa-Zaa-|-(S,diacylglyceryl)Cys-, in which Xaa is hydrophobic (preferably Leu), and Yaa (Ala or Ser) and Zaa (Gly or Ala) have small, neutral side chains.. It participates in protein modification; lipoprotein biosynthesis (signal peptide cleavage). In terms of biological role, this protein specifically catalyzes the removal of signal peptides from prolipoproteins. The polypeptide is Lipoprotein signal peptidase (Yersinia pestis bv. Antiqua (strain Antiqua)).